The sequence spans 76 residues: MAYIYALIFAIVVCMNTDVIQAEESQHDTLENVEYRLSCIPKGGECERMADTCCPGLQCLGCNPFNKENLGKCKCQ.

Positions 1 to 22 are cleaved as a signal peptide; that stretch reads MAYIYALIFAIVVCMNTDVIQA.

In terms of processing, contains 4 disulfide bonds. Expressed by the venom gland.

Its subcellular location is the secreted. Its function is as follows. Inhibits voltage-gated calcium channel (Cav) currents in DRG neurons (IC(50)=1590 nM). The sequence is that of Omega-scoloptoxin(13)-Ssm2a from Scolopendra mutilans (Chinese red-headed centipede).